A 475-amino-acid chain; its full sequence is Ribulose bisphosphate carboxylase large chain (475 aa).

Positions 1 to 2 are excised as a propeptide; that stretch reads MS. Pro3 carries the post-translational modification N-acetylproline. At Lys14 the chain carries N6,N6,N6-trimethyllysine. Substrate is bound by residues Asn123 and Thr173. Lys175 acts as the Proton acceptor in catalysis. Lys177 contacts substrate. Mg(2+) is bound by residues Lys201, Asp203, and Glu204. Position 201 is an N6-carboxylysine (Lys201). His294 acts as the Proton acceptor in catalysis. Substrate-binding residues include Arg295, His327, and Ser379.

The protein belongs to the RuBisCO large chain family. Type I subfamily. As to quaternary structure, heterohexadecamer of 8 large chains and 8 small chains; disulfide-linked. The disulfide link is formed within the large subunit homodimers. Requires Mg(2+) as cofactor. In terms of processing, the disulfide bond which can form in the large chain dimeric partners within the hexadecamer appears to be associated with oxidative stress and protein turnover.

It localises to the plastid. It is found in the chloroplast. The enzyme catalyses 2 (2R)-3-phosphoglycerate + 2 H(+) = D-ribulose 1,5-bisphosphate + CO2 + H2O. It catalyses the reaction D-ribulose 1,5-bisphosphate + O2 = 2-phosphoglycolate + (2R)-3-phosphoglycerate + 2 H(+). RuBisCO catalyzes two reactions: the carboxylation of D-ribulose 1,5-bisphosphate, the primary event in carbon dioxide fixation, as well as the oxidative fragmentation of the pentose substrate in the photorespiration process. Both reactions occur simultaneously and in competition at the same active site. The protein is Ribulose bisphosphate carboxylase large chain of Cerastium glomeratum (Sticky chickweed).